Here is a 288-residue protein sequence, read N- to C-terminus: Ninja-family protein 6 (288 aa).

Disordered stretches follow at residues 1 to 50 (MASR…KRPR) and 66 to 207 (LHAD…TRTG). A compositionally biased stretch (gly residues) spans 12-23 (AGEGAGPPGDAG). The segment covering 76–86 (LPLLRTTSLPT) has biased composition (low complexity). Positions 91 to 103 (ERWRRREMQSRRR) are enriched in basic and acidic residues. A compositionally biased stretch (polar residues) spans 131–173 (RRSNASQGSNSASTTEQGIGGSMFNQSADAKSPSTSDNRNQND). Residues 195-207 (RLRTLGSLTTRTG) show a composition bias toward low complexity.

Belongs to the Ninja family.

It localises to the nucleus. The protein is Ninja-family protein 6 of Zea mays (Maize).